Consider the following 715-residue polypeptide: SEC14-like protein 1 (715 aa).

One can recognise a PRELI/MSF1 domain in the interval 1–175 (MVQKYQSPVR…YLRQLEEEGI (175 aa)). The tract at residues 1-510 (MVQKYQSPVR…VPKSLYRTAE (510 aa)) is required for interaction and inhibitory function toward RIGI. T234 is subject to Phosphothreonine. One can recognise a CRAL-TRIO domain in the interval 319–495 (PPQVLQDYYA…FLSGECMCEV (177 aa)). The GOLD domain occupies 521–674 (TETIYQSASV…KCKVMYYTEV (154 aa)). S586 carries the post-translational modification Phosphoserine.

Interacts with RIGI (via tandem CARD domain); the interaction is direct. Interacts (via GOLD domain) with SLC18A3; the interaction is direct. Interacts with SLC5A7 (via GOLD domain); the interaction is direct. As to expression, ubiquitous.

Its subcellular location is the cytoplasm. It is found in the golgi apparatus. May play a role in innate immunity by inhibiting the antiviral RIG-I signaling pathway. In this pathway, functions as a negative regulator of RIGI, the cytoplasmic sensor of viral nucleic acids. Prevents the interaction of RIGI with MAVS/IPS1, an important step in signal propagation. May also regulate the SLC18A3 and SLC5A7 cholinergic transporters. This is SEC14-like protein 1 (SEC14L1) from Homo sapiens (Human).